A 689-amino-acid chain; its full sequence is DNA ligase (689 aa).

NAD(+)-binding positions include 40-44, 89-90, and Glu121; these read DSEYD and SL. Catalysis depends on Lys123, which acts as the N6-AMP-lysine intermediate. Arg144, Glu179, Lys295, and Lys319 together coordinate NAD(+). Residues Cys413, Cys416, Cys431, and Cys437 each contribute to the Zn(2+) site. Residues 610–689 form the BRCT domain; that stretch reads REQSSLTDKI…EEWLTLIKNV (80 aa).

It belongs to the NAD-dependent DNA ligase family. LigA subfamily. Mg(2+) is required as a cofactor. Mn(2+) serves as cofactor.

It carries out the reaction NAD(+) + (deoxyribonucleotide)n-3'-hydroxyl + 5'-phospho-(deoxyribonucleotide)m = (deoxyribonucleotide)n+m + AMP + beta-nicotinamide D-nucleotide.. In terms of biological role, DNA ligase that catalyzes the formation of phosphodiester linkages between 5'-phosphoryl and 3'-hydroxyl groups in double-stranded DNA using NAD as a coenzyme and as the energy source for the reaction. It is essential for DNA replication and repair of damaged DNA. The polypeptide is DNA ligase (Rickettsia massiliae (strain Mtu5)).